The chain runs to 217 residues: MASQKQMEVVTKGTGFRRRPKTITYTPGTCELLRVMMKESKLTNIQQRHIMDIMKRGDALPLQCSPTSSQRVLPSKQIASPIYLPPILAARPHLRPANMCQANGAYSREQFKPQATRDLEKEKQRLQNIFATGKDMEERKRKAPPARQKAPAPELDRFEELVKEIQERKEFLADMEALGQGKQYRGIILAEISQKLREMEDIDHRRSEELRKGLATT.

Belongs to the UPF0193 (EVG1) family.

The protein is UPF0193 protein EVG1 (C22orf23) of Homo sapiens (Human).